Consider the following 83-residue polypeptide: Beta/kappa-theraphotoxin-Cg2a (83 aa).

The signal sequence occupies residues 1 to 21 (MKASVFAVILGLVVLCACSFA). Residues 22–53 (EDEQDQFVSPNELLKSMFVESRHEFTPEVEGR) constitute a propeptide that is removed on maturation. 3 disulfides stabilise this stretch: cysteine 55–cysteine 69, cysteine 62–cysteine 74, and cysteine 68–cysteine 78. At isoleucine 82 the chain carries Isoleucine amide.

The protein belongs to the neurotoxin 30 (phrixotoxin) family. Expressed by the venom gland.

It localises to the secreted. Its function is as follows. This gating-modifier toxin shows an important inhibitory activity on sodium channels. It is very active on Nav1.7/SCN9A (IC(50)~0.6 nM), and also shows activity on Nav1.3/SCN3A (IC(50)=292 nM), Nav1.4/SCN4A (IC(50)=2.2-159 nM), and Nav1.5/SCN5A (IC(50)=2.3-2.9 uM). It has also been shown to inhibit tetrodotoxin (TTX)-resistant (IC(50)=27.6 nM) and TTX-sensitive (IC(50)=30.2 nM) sodium channels in rat dorsal root ganglion neurons. Lower inhibitory activity has also been shown on potassium channels: Kv4.2/KCND2 (IC(50)=604.2 nM), Kv4.3/KCND3 (IC(50)=425.1 nM), and Kv2.1/KCNB1 (IC(50)=14.3 uM). It binds to phospholipid membranes. Like its analog AM-8145, it may act by interacting only with the second voltage-sensor domain of Nav1.7/SCN9A. The sequence is that of Beta/kappa-theraphotoxin-Cg2a from Chilobrachys guangxiensis (Chinese earth tiger tarantula).